The sequence spans 148 residues: Large ribosomal subunit protein uL13 (148 aa).

It belongs to the universal ribosomal protein uL13 family. As to quaternary structure, part of the 50S ribosomal subunit.

This protein is one of the early assembly proteins of the 50S ribosomal subunit, although it is not seen to bind rRNA by itself. It is important during the early stages of 50S assembly. This chain is Large ribosomal subunit protein uL13, found in Sulfolobus acidocaldarius (strain ATCC 33909 / DSM 639 / JCM 8929 / NBRC 15157 / NCIMB 11770).